The primary structure comprises 200 residues: Adenylate kinase (200 aa).

10–15 contacts ATP; it reads GAGKGT. The interval 30–59 is NMP; sequence STGDMLRAAVAAETPVGLEAKAIMESGGLV. AMP is bound by residues T31, R36, 57–59, 85–88, and Q92; these read GLV and GFPR. The tract at residues 126-142 is LID; sequence KRAEETAARGQPVRKDD. Residue R127 coordinates ATP. AMP-binding residues include R139 and R150. An ATP-binding site is contributed by K178.

It belongs to the adenylate kinase family. As to quaternary structure, monomer.

It is found in the cytoplasm. It catalyses the reaction AMP + ATP = 2 ADP. The protein operates within purine metabolism; AMP biosynthesis via salvage pathway; AMP from ADP: step 1/1. In terms of biological role, catalyzes the reversible transfer of the terminal phosphate group between ATP and AMP. Plays an important role in cellular energy homeostasis and in adenine nucleotide metabolism. The protein is Adenylate kinase of Methylorubrum extorquens (strain CM4 / NCIMB 13688) (Methylobacterium extorquens).